Consider the following 631-residue polypeptide: Mitochondrial Rho GTPase 1 (631 aa).

The Cytoplasmic portion of the chain corresponds to 1-605; that stretch reads MPAGRGRPLR…TQADLKSSTF (605 aa). The region spanning 15–181 is the Miro 1 domain; the sequence is KKDVRILLVG…FYYAQKAVLH (167 aa). The GTP site is built by Arg-27, Gly-29, Lys-30, Thr-31, and Ser-32. Thr-31 serves as a coordination point for Mg(2+). The Mg(2+) site is built by Pro-48 and Asp-70. Position 72 (Ser-72) interacts with GTP. Residue Lys-105 is modified to N6-acetyllysine. 5 residues coordinate GTP: Asn-131, Lys-132, Asp-134, Ala-162, and Lys-163. Lys-166 is covalently cross-linked (Glycyl lysine isopeptide (Lys-Gly) (interchain with G-Cter in ubiquitin)). Positions 197 to 232 constitute an EF-hand 1 domain; the sequence is ACIKALTRIFKISDQDNDGTLNDAELNFFQRICFNT. The Ca(2+) site is built by Asp-210, Asp-212, Asp-214, Thr-216, and Glu-221. Residue Lys-248 forms a Glycyl lysine isopeptide (Lys-Gly) (interchain with G-Cter in ubiquitin) linkage. Residues 317–352 form the EF-hand 2 domain; it reads HAYLFLQSTFDKHDLDRDCALSPDELKDLFKVFPYI. Residues Asp-330, Asp-332, Asp-334, Ala-336, and Glu-341 each contribute to the Ca(2+) site. Residues 429 to 592 enclose the Miro 2 domain; the sequence is RNVFRCNVIG…FVKLTTMAMY (164 aa). Asn-441, Cys-442, Gly-443, Lys-444, Ser-445, Gly-446, Lys-460, Lys-541, Asp-543, Thr-571, and Cys-572 together coordinate GTP. Asn-441 is a Mg(2+) binding site. Lys-585 participates in a covalent cross-link: Glycyl lysine isopeptide (Lys-Gly) (interchain with G-Cter in ubiquitin). Residues 606–628 traverse the membrane as a helical; Anchor for type IV membrane protein segment; that stretch reads WLRASFGATVFAVLGFAMYKALL. The Mitochondrial intermembrane segment spans residues 629–631; sequence KQR.

It belongs to the mitochondrial Rho GTPase family. As to quaternary structure, homodimer. Interacts with the kinesin-binding proteins TRAK1/OIP106 and TRAK2/GRIF1, forming a link between mitochondria and the trafficking apparatus of the microtubules. Interacts with RAP1GDS1. Interacts with ARMCX1. Found in a complex with KIF5B, OGT, RHOT2 and TRAK1. In terms of processing, ubiquitinated by PRKN during mitophagy, leading to its degradation and enhancement of mitophagy. Deubiquitinated by USP30. Post-translationally, acetylation on Lys-105 decreases sensitivity of mitochondrial transport to elevated Ca(2+) levels, increases mitochondrial transport and promotes axon growth. Deacetylated by HDAC6 which blocks mitochondrial transport and mediates axon growth inhibition.

It localises to the mitochondrion outer membrane. The catalysed reaction is GTP + H2O = GDP + phosphate + H(+). It catalyses the reaction ATP + H2O = ADP + phosphate + H(+). It carries out the reaction UTP + H2O = UDP + phosphate + H(+). Its function is as follows. Atypical mitochondrial nucleoside-triphosphatase (NTPase) involved in mitochondrial trafficking. Probably involved in control of anterograde transport of mitochondria and their subcellular distribution. Promotes mitochondrial fission during high calcium conditions. Can hydrolyze GTP, ATP and UTP. This is Mitochondrial Rho GTPase 1 (RHOT1) from Bos taurus (Bovine).